Here is a 1027-residue protein sequence, read N- to C-terminus: Multidrug resistance protein MdtC (1027 aa).

12 helical membrane-spanning segments follow: residues 16–36 (LLSL…PVAP), 333–353 (EVER…FLFL), 360–380 (LIPA…MYLC), 387–407 (LSLM…IVVL), 431–451 (VGFT…PLLL), 463–483 (FAIT…TLTP), 528–548 (WIMA…ISAP), 853–873 (LILI…LYES), 875–895 (IHPL…LLAL), 897–917 (LFDT…IGIV), 953–973 (PIIM…LSSG), and 984–1004 (ITIV…TPII).

The protein belongs to the resistance-nodulation-cell division (RND) (TC 2.A.6) family. MdtC subfamily. As to quaternary structure, part of a tripartite efflux system composed of MdtA, MdtB and MdtC. MdtC forms a heteromultimer with MdtB.

It is found in the cell inner membrane. The sequence is that of Multidrug resistance protein MdtC from Proteus mirabilis (strain HI4320).